The primary structure comprises 163 residues: RNA pyrophosphohydrolase (163 aa).

In terms of domain architecture, Nudix hydrolase spans 6–149 (GYRLNVGIVI…KRDVYRQVMK (144 aa)). The Nudix box signature appears at 38–59 (GGIHLTESPEEAMYRELFEELG).

This sequence belongs to the Nudix hydrolase family. RppH subfamily. A divalent metal cation serves as cofactor.

Its function is as follows. Accelerates the degradation of transcripts by removing pyrophosphate from the 5'-end of triphosphorylated RNA, leading to a more labile monophosphorylated state that can stimulate subsequent ribonuclease cleavage. The polypeptide is RNA pyrophosphohydrolase (Hamiltonella defensa subsp. Acyrthosiphon pisum (strain 5AT)).